The primary structure comprises 478 residues: V-type proton ATPase subunit H (478 aa).

Belongs to the V-ATPase H subunit family. V-ATPase is a heteromultimeric enzyme composed of a peripheral catalytic V1 complex (components A to H) attached to an integral membrane V0 proton pore complex (components: a, c, c', c'', d, e, f and VOA1). Interacts with YND1.

Its subcellular location is the vacuole membrane. Subunit of the V1 complex of vacuolar(H+)-ATPase (V-ATPase), a multisubunit enzyme composed of a peripheral complex (V1) that hydrolyzes ATP and a membrane integral complex (V0) that translocates protons. V-ATPase is responsible for acidifying and maintaining the pH of intracellular compartments. This subunit is essential for activity, but not assembly, of the enzyme complex. This subunit is also required for silencing the ATPase activity of V-ATPase when V1 is detached from V0. This chain is V-type proton ATPase subunit H, found in Saccharomyces cerevisiae (strain ATCC 204508 / S288c) (Baker's yeast).